Consider the following 210-residue polypeptide: Thiamine-phosphate synthase (210 aa).

Residues 39–43 (QLREK) and asparagine 71 contribute to the 4-amino-2-methyl-5-(diphosphooxymethyl)pyrimidine site. Mg(2+)-binding residues include aspartate 72 and aspartate 91. Residue serine 110 coordinates 4-amino-2-methyl-5-(diphosphooxymethyl)pyrimidine. 136–138 (TST) contacts 2-[(2R,5Z)-2-carboxy-4-methylthiazol-5(2H)-ylidene]ethyl phosphate. Position 139 (lysine 139) interacts with 4-amino-2-methyl-5-(diphosphooxymethyl)pyrimidine. 2-[(2R,5Z)-2-carboxy-4-methylthiazol-5(2H)-ylidene]ethyl phosphate-binding positions include glycine 166 and 186-187 (VS).

The protein belongs to the thiamine-phosphate synthase family. Mg(2+) serves as cofactor.

It catalyses the reaction 2-[(2R,5Z)-2-carboxy-4-methylthiazol-5(2H)-ylidene]ethyl phosphate + 4-amino-2-methyl-5-(diphosphooxymethyl)pyrimidine + 2 H(+) = thiamine phosphate + CO2 + diphosphate. The catalysed reaction is 2-(2-carboxy-4-methylthiazol-5-yl)ethyl phosphate + 4-amino-2-methyl-5-(diphosphooxymethyl)pyrimidine + 2 H(+) = thiamine phosphate + CO2 + diphosphate. The enzyme catalyses 4-methyl-5-(2-phosphooxyethyl)-thiazole + 4-amino-2-methyl-5-(diphosphooxymethyl)pyrimidine + H(+) = thiamine phosphate + diphosphate. It participates in cofactor biosynthesis; thiamine diphosphate biosynthesis; thiamine phosphate from 4-amino-2-methyl-5-diphosphomethylpyrimidine and 4-methyl-5-(2-phosphoethyl)-thiazole: step 1/1. Functionally, condenses 4-methyl-5-(beta-hydroxyethyl)thiazole monophosphate (THZ-P) and 2-methyl-4-amino-5-hydroxymethyl pyrimidine pyrophosphate (HMP-PP) to form thiamine monophosphate (TMP). The chain is Thiamine-phosphate synthase from Ruminiclostridium cellulolyticum (strain ATCC 35319 / DSM 5812 / JCM 6584 / H10) (Clostridium cellulolyticum).